Reading from the N-terminus, the 41-residue chain is MLLLQILFALLQRYRYKPHSLSDGLLLALHFLLFFRALPKS.

May play a role in host modulation. This is ORF3c protein from Severe acute respiratory syndrome coronavirus 2 (2019-nCoV).